The primary structure comprises 342 residues: Probable receptor-like protein kinase At4g10390 (342 aa).

In terms of domain architecture, Protein kinase spans serine 41 to leucine 336. ATP contacts are provided by residues isoleucine 47–isoleucine 55 and lysine 69. Aspartate 165 (proton acceptor) is an active-site residue. 2 positions are modified to phosphoserine: serine 169 and serine 201. Residue tyrosine 220 is modified to Phosphotyrosine.

The protein belongs to the protein kinase superfamily. Ser/Thr protein kinase family.

The catalysed reaction is L-seryl-[protein] + ATP = O-phospho-L-seryl-[protein] + ADP + H(+). It catalyses the reaction L-threonyl-[protein] + ATP = O-phospho-L-threonyl-[protein] + ADP + H(+). This is Probable receptor-like protein kinase At4g10390 from Arabidopsis thaliana (Mouse-ear cress).